We begin with the raw amino-acid sequence, 632 residues long: 2-oxoacid:ferredoxin oxidoreductase subunit alpha (632 aa).

The YPITP motif motif lies at 253–257 (YPITP). Threonine 256 and arginine 344 together coordinate substrate.

As to quaternary structure, heterodimer composed of an alpha and a beta subunit.

The protein resides in the cytoplasm. It carries out the reaction a 2-oxocarboxylate + 2 oxidized [2Fe-2S]-[ferredoxin] + CoA = an acyl-CoA + 2 reduced [2Fe-2S]-[ferredoxin] + CO2 + H(+). In terms of biological role, catalyzes the coenzyme A-dependent oxidative decarboxylation of different 2-oxoacids such as 2-oxoglutarate, pyruvate and 2-oxobutyrate to form their CoA derivatives. This chain is 2-oxoacid:ferredoxin oxidoreductase subunit alpha, found in Sulfolobus sp.